The following is a 747-amino-acid chain: Polyribonucleotide nucleotidyltransferase (747 aa).

2 residues coordinate Mg(2+): Asp-487 and Asp-493. One can recognise a KH domain in the interval 554 to 613 (PSTTTIKIDKDKIRDIIGPGGKIIKEICETSGAKIDISDDGTVSVYAADRDKLKIASDKI). The S1 motif domain maps to 623 to 691 (GEIFNGTVTK…NKGKAKLTIK (69 aa)). The tract at residues 694–716 (DKDKSLNNPKPQNSINNAKENSE) is disordered. Positions 699-712 (LNNPKPQNSINNAK) are enriched in polar residues.

Belongs to the polyribonucleotide nucleotidyltransferase family. The cofactor is Mg(2+).

The protein resides in the cytoplasm. It catalyses the reaction RNA(n+1) + phosphate = RNA(n) + a ribonucleoside 5'-diphosphate. Its function is as follows. Involved in mRNA degradation. Catalyzes the phosphorolysis of single-stranded polyribonucleotides processively in the 3'- to 5'-direction. This is Polyribonucleotide nucleotidyltransferase from Rickettsia canadensis (strain McKiel).